The following is a 745-amino-acid chain: MAGSRRLAHFFMASCLFLCYTASVNGGKRGNSDKCSYKQGTQTSSMDEGARKLGVTFRYDNCSVNWSPLGKHAIHEVNNISFSHLSCDSQAAVVVHWMASPLGIEHVKGFRVYLEDKNPERKQCQHLILKDPRQLNFSYKTIRMSSQPFSSLAFETDYMVRIVPFPTFLNDSFFPPSFLRTNSCEVLLGPDNLVCKPFWKPKMLNVSQLGSNLHVVFDHAPSTFGFSIYYLYYKLRQEGPFRLKRCKPEQNGPKTTCVLQDVTPGTYAIELRDDSNNTRRQTQYHVSQVHSPWAGPIRAMAITVPLVIMSAFATLFTVMCRKKQQENIYSHLDEESSESSSQTTALSADRPWPRPKIFICYSSRDGAKHLAVIQSFAFFLQDFCGCEVSLDLWEHLEICKEGQMSWLSRRIDEAHFIITVCSKGLKHFVEKRHRKGKATSKEKNREPSASDSSSSSRDLFIVASAIISEKLKEVHQKSSDLSRFMSVYFDYSHETDVPTSLSLAPKFKLMDQLPQLFARLHSRQLSLTDREPQPPNVSKRNYFCSKSGRSLYVAIYNMHQHVTQEPDWLEKELMPPPLPNKRTIPEKVDSGLVLNEVKLKHGSESECPPVRSNVLILPQTPQVGVSLSLSREDLGEGSSSQDAGSCRPVLHTDGSASPPEMPRDSGIYDSSVPSSELSIPLMDGLSPDHADNSSLADSVSSSSGLGDEEPPAVSSLHCTAHTICKADLHHQHLHPSEGLIAAAST.

The signal sequence occupies residues M1–G26. At G27–R298 the chain is on the extracellular side. N-linked (GlcNAc...) asparagine glycans are attached at residues N61, N79, N136, N170, N205, and N276. The chain crosses the membrane as a helical span at residues A299–M319. At C320–T745 the chain is on the cytoplasmic side. The 165-residue stretch at R354–A518 folds into the SEFIR domain. Disordered regions lie at residues R432–S454 and R631–V713. The span at T439–S448 shows a compositional bias: basic and acidic residues. Residues S693 to L705 are compositionally biased toward low complexity.

In terms of assembly, interacts with fgfr1 and fgfr2.

It is found in the membrane. Functionally, feedback inhibitor of fibroblast growth factor mediated Ras-MAPK signaling and ERK activation. May inhibit FGF-induced FGFR1 tyrosine phosphorylation. This chain is Interleukin-17 receptor D (il17rd), found in Danio rerio (Zebrafish).